The following is a 261-amino-acid chain: Vacuolar protein sorting-associated protein 37D (261 aa).

Residues Ala93–Ala182 enclose the VPS37 C-terminal domain. The tract at residues Leu172–Arg261 is disordered. The segment covering Pro181–Ala195 has biased composition (low complexity). Pro residues-rich tracts occupy residues Gly215–Leu224 and Pro231–Arg261.

The protein belongs to the VPS37 family. Component of the ESCRT-I complex (endosomal sorting complex required for transport I) which consists of TSG101, VPS28, a VPS37 protein (VPS37A to -D) and MVB12A or MVB12B in a 1:1:1:1 stoichiometry. Interacts with TSG101 and MVB12A. Component of the ESCRT-I complex (endosomal sorting complex required for transport I) which consists of TSG101, VPS28, a VPS37 protein (VPS37A to -D) and UBAP1 in a 1:1:1:1 stoichiometry.

It is found in the late endosome membrane. In terms of biological role, component of the ESCRT-I complex, a regulator of vesicular trafficking process. Required for the sorting of endocytic ubiquitinated cargos into multivesicular bodies. May be involved in cell growth and differentiation. This chain is Vacuolar protein sorting-associated protein 37D, found in Mus musculus (Mouse).